A 485-amino-acid chain; its full sequence is Ras-like GTPase YcjX (485 aa).

The Walker A motif motif lies at 33–40; sequence GLSGAGKT. GTP contacts are provided by S35, G36, G38, K39, T40, A41, W110, S113, T114, R115, K355, D357, and H358. Residues G36, G38, K39, T40, A41, W110, S113, and T114 each coordinate GDP. GDP contacts are provided by K355, D357, H358, S395, A396, and I397. GTP is bound at residue I397.

As to quaternary structure, monomer in solution. The cofactor is Mg(2+).

It catalyses the reaction GTP + H2O = GDP + phosphate + H(+). Its activity is regulated as follows. Alternates between an inactive form bound to GDP and an active form bound to GTP. Likely activated by a guanine nucleotide-exchange factor (GEF). Its function is as follows. Binds GTP and GDP. Has intrinsic GTPase activity. Does not hydrolyze ATP. May act as a transducer of stress responses. This chain is Ras-like GTPase YcjX, found in Shewanella oneidensis (strain ATCC 700550 / JCM 31522 / CIP 106686 / LMG 19005 / NCIMB 14063 / MR-1).